The primary structure comprises 196 residues: Carnitine operon protein CaiE (196 aa).

The tract at residues 173–196 (TQPLRQMEENRPRLQGTTDVTPKR) is disordered. Polar residues predominate over residues 187-196 (QGTTDVTPKR).

The protein belongs to the transferase hexapeptide repeat family.

The protein operates within amine and polyamine metabolism; carnitine metabolism. Overproduction of CaiE stimulates the activity of CaiB and CaiD. The protein is Carnitine operon protein CaiE of Escherichia coli O127:H6 (strain E2348/69 / EPEC).